The following is a 143-amino-acid chain: Cytochrome c-type biogenesis protein CcmE (143 aa).

The Cytoplasmic segment spans residues 1–8; sequence MNPVRRRK. Residues 9–29 traverse the membrane as a helical; Signal-anchor for type II membrane protein segment; that stretch reads LFILLFALTILSAAAALVLYA. The Periplasmic portion of the chain corresponds to 30–143; sequence LRQNISLFYT…KSALADKVKQ (114 aa). Residues His124 and Tyr128 each contribute to the heme site.

The protein belongs to the CcmE/CycJ family.

Its subcellular location is the cell inner membrane. In terms of biological role, heme chaperone required for the biogenesis of c-type cytochromes. Transiently binds heme delivered by CcmC and transfers the heme to apo-cytochromes in a process facilitated by CcmF and CcmH. The sequence is that of Cytochrome c-type biogenesis protein CcmE from Legionella pneumophila (strain Corby).